The chain runs to 714 residues: Mitochondrial potassium channel ATP-binding subunit (714 aa).

The transit peptide at 1–25 directs the protein to the mitochondrion; the sequence is MLVHLFRVGIRGGPVPRWSLQSLRF. 4 helical membrane passes run 127-147, 178-198, 278-298, and 365-385; these read LLAL…NVQI, IQLL…LVLL, LMLA…GSGL, and NIAF…LVAG. Residues 132–419 form the ABC transmembrane type-1 domain; sequence LAIVLALGAA…LSVLFGQVVR (288 aa). Positions 454–691 constitute an ABC transporter domain; the sequence is ITFQNVSFSY…GGLYAELIRR (238 aa). 489-496 is an ATP binding site; that stretch reads GQSGGGKT.

The protein belongs to the ABC transporter superfamily. ABCB family. Multidrug resistance exporter (TC 3.A.1.201) subfamily. In terms of assembly, the mitochondrial potassium channel (mitoK(ATP)) is composed of 4 subunits of CCDC51/MITOK and 4 subunits of ABCB8/MITOSUR. Physically interacts with PAAT. Interacts with Neuropilin-1 (NRP1) in mitochondria. Strong expression is found in the heart, brain and testis. In the testis, expressed both in the somatic Sertoli cells and peritubular cells and in the germline (spermatogonia and pachytene spermatocytes). Also expressed in the lung, liver, intestine and kidney.

It is found in the mitochondrion inner membrane. Channel activity inhibited by ATP via ABCB8/MITOSUR subunit. In terms of biological role, ATP-binding subunit of the mitochondrial ATP-gated potassium channel (mitoK(ATP)). v. An increase in ATP intracellular levels closes the channel, inhibiting K(+) transport, whereas a decrease in ATP levels enhances K(+) uptake in the mitochondrial matrix. Plays a role in mitochondrial iron transport. Required for maintenance of normal cardiac function, possibly by influencing mitochondrial iron export and regulating the maturation of cytosolic iron sulfur cluster-containing enzymes. The protein is Mitochondrial potassium channel ATP-binding subunit of Rattus norvegicus (Rat).